The following is a 448-amino-acid chain: Mitochondrial distribution and morphology protein 10 (448 aa).

The protein belongs to the MDM10 family. Component of the ER-mitochondria encounter structure (ERMES) or MDM complex, composed of MMM1, MDM10, MDM12 and MDM34. Associates with the mitochondrial outer membrane sorting assembly machinery SAM(core) complex.

The protein localises to the mitochondrion outer membrane. Functionally, component of the ERMES/MDM complex, which serves as a molecular tether to connect the endoplasmic reticulum and mitochondria. Components of this complex are involved in the control of mitochondrial shape and protein biogenesis and may function in phospholipid exchange. MDM10 is involved in the late assembly steps of the general translocase of the mitochondrial outer membrane (TOM complex). Functions in the TOM40-specific route of the assembly of outer membrane beta-barrel proteins, including the association of TOM40 with the receptor TOM22 and small TOM proteins. Can associate with the SAM(core) complex as well as the MDM12-MMM1 complex, both involved in late steps of the major beta-barrel assembly pathway, that is responsible for biogenesis of all outer membrane beta-barrel proteins. May act as a switch that shuttles between both complexes and channels precursor proteins into the TOM40-specific pathway. Plays a role in mitochondrial morphology and in the inheritance of mitochondria. The polypeptide is Mitochondrial distribution and morphology protein 10 (Podospora anserina (strain S / ATCC MYA-4624 / DSM 980 / FGSC 10383) (Pleurage anserina)).